The sequence spans 179 residues: MSKTLQSFNLLKWIDENKELLKPPVNNKVIWQDSEFIAMILGGPNRRRDFHVDPSDEFFYQIKGECYVECITEEGKREVVTVKEGDVFMLPAMVPHSPHRVANTYGLVIERKRSQGELEDFVWFCDECNHEMHRVRVQLSDIEKQVKEAIHSFNSNKEIRACKNCGHIMPEEVEEWKCE.

Arg-47 provides a ligand contact to O2. Residues His-51, Glu-57, and His-96 each coordinate Fe cation. Glu-57 serves as a coordination point for substrate. Substrate contacts are provided by Arg-100 and Glu-110. Residues Cys-125, Cys-128, Cys-162, and Cys-165 each coordinate Fe cation.

Belongs to the 3-HAO family. Fe(2+) serves as cofactor.

It catalyses the reaction 3-hydroxyanthranilate + O2 = (2Z,4Z)-2-amino-3-carboxymuconate 6-semialdehyde. Its pathway is cofactor biosynthesis; NAD(+) biosynthesis; quinolinate from L-kynurenine: step 3/3. In terms of biological role, catalyzes the oxidative ring opening of 3-hydroxyanthranilate to 2-amino-3-carboxymuconate semialdehyde, which spontaneously cyclizes to quinolinate. This Bacillus cereus (strain 03BB102) protein is 3-hydroxyanthranilate 3,4-dioxygenase.